A 448-amino-acid chain; its full sequence is Phosphoglucosamine mutase (448 aa).

Catalysis depends on serine 100, which acts as the Phosphoserine intermediate. Positions 100, 240, 242, and 244 each coordinate Mg(2+). Serine 100 carries the post-translational modification Phosphoserine.

The protein belongs to the phosphohexose mutase family. Mg(2+) serves as cofactor. In terms of processing, activated by phosphorylation.

It carries out the reaction alpha-D-glucosamine 1-phosphate = D-glucosamine 6-phosphate. In terms of biological role, catalyzes the conversion of glucosamine-6-phosphate to glucosamine-1-phosphate. This is Phosphoglucosamine mutase from Bacillus cereus (strain ATCC 10987 / NRS 248).